A 305-amino-acid polypeptide reads, in one-letter code: Energy-coupling factor transporter ATP-binding protein EcfA2 (305 aa).

One can recognise an ABC transporter domain in the interval 13 to 262; sequence LQNVDITFTN…KNLLQELLIE (250 aa). Residue 55-62 coordinates ATP; it reads GSTGSGKS.

The protein belongs to the ABC transporter superfamily. Energy-coupling factor EcfA family. Forms a stable energy-coupling factor (ECF) transporter complex composed of 2 membrane-embedded substrate-binding proteins (S component), 2 ATP-binding proteins (A component) and 2 transmembrane proteins (T component).

It localises to the cell membrane. Its function is as follows. ATP-binding (A) component of a common energy-coupling factor (ECF) ABC-transporter complex. Unlike classic ABC transporters this ECF transporter provides the energy necessary to transport a number of different substrates. The chain is Energy-coupling factor transporter ATP-binding protein EcfA2 from Spiroplasma kunkelii.